A 414-amino-acid chain; its full sequence is 3-oxo-tetronate kinase (414 aa).

ATP is bound by residues serine 255, 355 to 358, and glycine 398; that span reads GGET.

It belongs to the four-carbon acid sugar kinase family.

The catalysed reaction is 3-dehydro-L-erythronate + ATP = 3-dehydro-4-O-phospho-L-erythronate + ADP + H(+). The enzyme catalyses 3-dehydro-D-erythronate + ATP = 3-dehydro-4-O-phospho-D-erythronate + ADP + H(+). In terms of biological role, catalyzes the ATP-dependent phosphorylation of 3-oxo-tetronate to 3-oxo-tetronate 4-phosphate. This Actinobacillus succinogenes (strain ATCC 55618 / DSM 22257 / CCUG 43843 / 130Z) protein is 3-oxo-tetronate kinase.